We begin with the raw amino-acid sequence, 257 residues long: NAD-capped RNA hydrolase NudC (257 aa).

Arginine 69 provides a ligand contact to substrate. Cysteine 98 and cysteine 101 together coordinate Zn(2+). Position 111 (glutamate 111) interacts with substrate. 2 residues coordinate Zn(2+): cysteine 116 and cysteine 119. Substrate is bound at residue tyrosine 124. Residues 125–248 enclose the Nudix hydrolase domain; it reads PQIAPCIIVA…TVARRLIEDT (124 aa). A divalent metal cation contacts are provided by alanine 158, glutamate 174, and glutamate 178. Positions 159-180 match the Nudix box motif; that stretch reads GFVEVGETLEQAVAREVMEESG. 192 to 199 serves as a coordination point for substrate; that stretch reads QPWPFPQS. An a divalent metal cation-binding site is contributed by glutamate 219. Residue alanine 241 participates in substrate binding.

The protein belongs to the Nudix hydrolase family. NudC subfamily. In terms of assembly, homodimer. The cofactor is Mg(2+). Mn(2+) serves as cofactor. Zn(2+) is required as a cofactor.

The catalysed reaction is a 5'-end NAD(+)-phospho-ribonucleoside in mRNA + H2O = a 5'-end phospho-adenosine-phospho-ribonucleoside in mRNA + beta-nicotinamide D-ribonucleotide + 2 H(+). It carries out the reaction NAD(+) + H2O = beta-nicotinamide D-ribonucleotide + AMP + 2 H(+). The enzyme catalyses NADH + H2O = reduced beta-nicotinamide D-ribonucleotide + AMP + 2 H(+). Its function is as follows. mRNA decapping enzyme that specifically removes the nicotinamide adenine dinucleotide (NAD) cap from a subset of mRNAs by hydrolyzing the diphosphate linkage to produce nicotinamide mononucleotide (NMN) and 5' monophosphate mRNA. The NAD-cap is present at the 5'-end of some mRNAs and stabilizes RNA against 5'-processing. Has preference for mRNAs with a 5'-end purine. Catalyzes the hydrolysis of a broad range of dinucleotide pyrophosphates. The protein is NAD-capped RNA hydrolase NudC of Salmonella choleraesuis (strain SC-B67).